Here is a 140-residue protein sequence, read N- to C-terminus: Small ribosomal subunit protein uS12 (140 aa).

At Asp103 the chain carries 3-methylthioaspartic acid. Positions 120–140 (GVQKRMQARSKYGAKRPKKGK) are disordered. Residues 125–140 (MQARSKYGAKRPKKGK) are compositionally biased toward basic residues.

This sequence belongs to the universal ribosomal protein uS12 family. In terms of assembly, part of the 30S ribosomal subunit. Contacts proteins S8 and S17. May interact with IF1 in the 30S initiation complex.

With S4 and S5 plays an important role in translational accuracy. Functionally, interacts with and stabilizes bases of the 16S rRNA that are involved in tRNA selection in the A site and with the mRNA backbone. Located at the interface of the 30S and 50S subunits, it traverses the body of the 30S subunit contacting proteins on the other side and probably holding the rRNA structure together. The combined cluster of proteins S8, S12 and S17 appears to hold together the shoulder and platform of the 30S subunit. The polypeptide is Small ribosomal subunit protein uS12 (Desulfitobacterium hafniense (strain Y51)).